The sequence spans 683 residues: Elongation factor G-like protein (683 aa).

The 263-residue stretch at Gln-5 to Glu-267 folds into the tr-type G domain. GTP contacts are provided by residues Gly-14 to Ser-21, Asp-73 to Phe-77, and Asn-127 to Asp-130.

This sequence belongs to the TRAFAC class translation factor GTPase superfamily. Classic translation factor GTPase family. EF-G/EF-2 subfamily.

The chain is Elongation factor G-like protein from Thermotoga maritima (strain ATCC 43589 / DSM 3109 / JCM 10099 / NBRC 100826 / MSB8).